A 233-amino-acid polypeptide reads, in one-letter code: Snake venom serine protease BthaTL (233 aa).

Positions 1 to 224 (VIGGDECDIN…YLPWIQSIIA (224 aa)) constitute a Peptidase S1 domain. Intrachain disulfides connect Cys-7–Cys-138, Cys-25–Cys-41, Cys-73–Cys-231, Cys-117–Cys-185, Cys-149–Cys-164, and Cys-175–Cys-200. Active-site charge relay system residues include His-40 and Asp-85. Ser-179 serves as the catalytic Charge relay system.

The protein belongs to the peptidase S1 family. Snake venom subfamily. As to quaternary structure, monomer. As to expression, expressed by the venom gland.

It is found in the secreted. In terms of biological role, snake venom serine protease that may act in the hemostasis system of the prey. This is Snake venom serine protease BthaTL from Bothrops alternatus (Urutu).